Consider the following 1549-residue polypeptide: FERM and PDZ domain-containing protein 1 (1549 aa).

The PDZ domain maps to threonine 57–threonine 135. Residues asparagine 181 to alanine 496 enclose the FERM domain. Disordered regions lie at residues alanine 554–aspartate 618, serine 717–tryptophan 738, tyrosine 775–serine 834, serine 913–isoleucine 1046, serine 1097–glutamate 1174, leucine 1231–proline 1257, and proline 1321–glutamine 1347. The span at serine 717–arginine 730 shows a compositional bias: polar residues. The important for interaction with GPSM2 stretch occupies residues glutamate 924–lysine 931. The span at proline 950 to glycine 961 shows a compositional bias: polar residues. Low complexity predominate over residues serine 962–proline 980. The segment covering serine 1117 to aspartate 1130 has biased composition (basic and acidic residues).

In terms of assembly, interacts with GPSM1. Interacts with GPSM2.

It localises to the cytoplasm. The protein resides in the cytosol. The protein localises to the cell membrane. In terms of biological role, stabilizes membrane-bound GPSM1, and thereby promotes its interaction with GNAI1. This chain is FERM and PDZ domain-containing protein 1 (Frmpd1), found in Mus musculus (Mouse).